The sequence spans 483 residues: Histone acetyltransferase esa1 (483 aa).

The region spanning 10 to 53 is the Tudor-knot domain; sequence QDGELRKAEILSIRQRKDGPSFYVHYVDFNKRLDEWIDASRLDL. Positions 57 to 69 are enriched in basic and acidic residues; that stretch reads VEWPQPEKPEKKK. The segment at 57–127 is disordered; that stretch reads VEWPQPEKPE…KENRDGTPLS (71 aa). The MYST-type HAT domain occupies 195–471; sequence HRVRNLNRLQ…IDPARLQWKP (277 aa). The C2HC MYST-type; degenerate zinc finger occupies 228–253; sequence IYIDEFCLSYFDDKRAFERHRTKCTL. Positions 278–299 match the ESA1-RPD3 motif motif; it reads RTWCRNLCLLSKLFLDHKTLYY. Lys295 is modified (N6-acetyllysine; by autocatalysis). Acetyl-CoA is bound by residues 336–340 and 345–351; these read ACILT and QRRGFGR. The active-site Proton donor/acceptor is the Glu371. Position 375 (Ser375) interacts with acetyl-CoA.

It belongs to the MYST (SAS/MOZ) family. Component of the NuA4 histone acetyltransferase complex. In terms of processing, autoacetylation at Lys-295 is required for proper function.

The protein localises to the nucleus. Its subcellular location is the chromosome. The catalysed reaction is L-lysyl-[histone] + acetyl-CoA = N(6)-acetyl-L-lysyl-[histone] + CoA + H(+). The enzyme catalyses L-lysyl-[protein] + acetyl-CoA = N(6)-acetyl-L-lysyl-[protein] + CoA + H(+). It catalyses the reaction 2-hydroxyisobutanoyl-CoA + L-lysyl-[protein] = N(6)-(2-hydroxyisobutanoyl)-L-lysyl-[protein] + CoA + H(+). It carries out the reaction (2E)-butenoyl-CoA + L-lysyl-[protein] = N(6)-(2E)-butenoyl-L-lysyl-[protein] + CoA + H(+). Its function is as follows. Catalytic component of the NuA4 histone acetyltransferase (HAT) complex which is involved in epigenetic transcriptional activation of selected genes principally by acetylation of nucleosomal histones H4, H3, H2B, H2A and H2A variant H2A.Z. Acetylates histone H4 to form H4K5ac, H4K8ac, H4K12ac and H4K16ac, histone H3 to form H3K14ac, and histone H2A to form H2AK4ac and H2AK7ac. The NuA4 complex is involved in the DNA damage response and is required for chromosome segregation. The NuA4 complex plays a direct role in repair of DNA double-strand breaks (DSBs) through homologous recombination. Recruitment to promoters depends on H3K4me. Also acetylates non-histone proteins. In addition to protein acetyltransferase, can use different acyl-CoA substrates, such as 2-hydroxyisobutanoyl-CoA (2-hydroxyisobutyryl-CoA) or (2E)-butenoyl-CoA (crotonyl-CoA), and is able to mediate protein 2-hydroxyisobutyrylation and crotonylation, respectively. The chain is Histone acetyltransferase esa1 (esa1) from Aspergillus fumigatus (strain ATCC MYA-4609 / CBS 101355 / FGSC A1100 / Af293) (Neosartorya fumigata).